The following is a 349-amino-acid chain: NADH-quinone oxidoreductase subunit H (349 aa).

The next 8 helical transmembrane spans lie at 19–39 (VWTLTKIVAIIAPLMLCVAYL), 88–108 (GLFILGPILAIAPSLAAWAVV), 123–143 (LLFLLAITSVEVYGVIIAGWA), 161–181 (VSYEVAMGFALICVLLISASL), 202–222 (FLSWNWIPLFPMFIVFLISGI), 249–269 (GMAFALFFLAEYANMILVSIL), 284–304 (FLPDGFFWLALKTAFFLFVFL), and 325–345 (VFIPITLVWVIVVAVWMMSPL).

The protein belongs to the complex I subunit 1 family. In terms of assembly, NDH-1 is composed of 14 different subunits. Subunits NuoA, H, J, K, L, M, N constitute the membrane sector of the complex.

The protein localises to the cell inner membrane. The catalysed reaction is a quinone + NADH + 5 H(+)(in) = a quinol + NAD(+) + 4 H(+)(out). Functionally, NDH-1 shuttles electrons from NADH, via FMN and iron-sulfur (Fe-S) centers, to quinones in the respiratory chain. The immediate electron acceptor for the enzyme in this species is believed to be ubiquinone. Couples the redox reaction to proton translocation (for every two electrons transferred, four hydrogen ions are translocated across the cytoplasmic membrane), and thus conserves the redox energy in a proton gradient. This subunit may bind ubiquinone. This is NADH-quinone oxidoreductase subunit H from Aromatoleum aromaticum (strain DSM 19018 / LMG 30748 / EbN1) (Azoarcus sp. (strain EbN1)).